A 280-amino-acid polypeptide reads, in one-letter code: 3-dehydroshikimate dehydratase (280 aa).

Residues tyrosine 70, arginine 102, and glutamate 142 each coordinate substrate. Glutamate 142 is a Mn(2+) binding site. Histidine 144 acts as the Proton acceptor in catalysis. Residues aspartate 172 and histidine 175 each coordinate substrate. Aspartate 172 is a Mn(2+) binding site. A Mn(2+)-binding site is contributed by histidine 198. Residues tyrosine 217 and glutamate 253 each coordinate substrate. Glutamate 253 is a Mn(2+) binding site.

Homodimer. Mn(2+) is required as a cofactor.

It carries out the reaction 3-dehydroshikimate = 3,4-dihydroxybenzoate + H2O. Its pathway is aromatic compound metabolism; 3,4-dihydroxybenzoate biosynthesis; 3,4-dihydroxybenzoate from 3-dehydroquinate: step 2/2. It participates in siderophore biosynthesis; petrobactin biosynthesis. Involved in the biosynthesis of petrobactin, a catecholate siderophore that functions in both iron acquisition and virulence. Catalyzes the conversion of 3-dehydroshikimate to 3,4-dihydroxybenzoate (3,4-DHBA). The chain is 3-dehydroshikimate dehydratase from Bacillus anthracis.